The sequence spans 434 residues: Na(+)/H(+) antiporter NhaA 1 (434 aa).

A compositionally biased stretch (pro residues) spans Met1–Pro15. The interval Met1 to Gly21 is disordered. 12 helical membrane-spanning segments follow: residues Gly34 to Ala54, Leu74 to Leu94, Ala112 to Ile132, Gly143 to Gly163, Phe173 to Tyr193, Gly196 to Val216, Ala222 to Ile242, Thr245 to Val265, Ile294 to Leu314, Ile326 to Ala346, Val362 to Leu382, and Ala393 to Leu413.

It belongs to the NhaA Na(+)/H(+) (TC 2.A.33) antiporter family.

The protein localises to the cell membrane. It catalyses the reaction Na(+)(in) + 2 H(+)(out) = Na(+)(out) + 2 H(+)(in). Its function is as follows. Na(+)/H(+) antiporter that extrudes sodium in exchange for external protons. This Clavibacter michiganensis subsp. michiganensis (strain NCPPB 382) protein is Na(+)/H(+) antiporter NhaA 1.